Consider the following 389-residue polypeptide: Endonuclease 8-like 1 (389 aa).

The Schiff-base intermediate with DNA role is filled by Pro2. The Proton donor role is filled by Glu3. The active-site Proton donor; for beta-elimination activity is the Lys54. Asn176 is a DNA binding site. Residues 278–389 are disordered; the sequence is TIWFQGDPGP…PREAGESSAS (112 aa). The segment covering 322 to 333 has biased composition (basic residues); the sequence is SRMRRARKHPPK. The segment covering 336–351 has biased composition (polar residues); that stretch reads AQQSEGAGLQQNQETP. Residues 357-373 are compositionally biased toward basic residues; it reads GKRRGQRASTGHRRRPK. Residues 374-389 are compositionally biased toward basic and acidic residues; the sequence is TIPDTRPREAGESSAS.

The protein belongs to the FPG family. In terms of tissue distribution, detected in heart, spleen and lung.

It is found in the cytoplasm. The protein localises to the cytoskeleton. Its subcellular location is the microtubule organizing center. It localises to the centrosome. The protein resides in the nucleus. It is found in the chromosome. It carries out the reaction 2'-deoxyribonucleotide-(2'-deoxyribose 5'-phosphate)-2'-deoxyribonucleotide-DNA = a 3'-end 2'-deoxyribonucleotide-(2,3-dehydro-2,3-deoxyribose 5'-phosphate)-DNA + a 5'-end 5'-phospho-2'-deoxyribonucleoside-DNA + H(+). In terms of biological role, involved in base excision repair of DNA damaged by oxidation or by mutagenic agents. Acts as a DNA glycosylase that recognizes and removes damaged bases. Has a preference for oxidized pyrimidines, such as thymine glycol, formamidopyrimidine (Fapy) and 5-hydroxyuracil. Has marginal activity towards 8-oxoguanine. Has AP (apurinic/apyrimidinic) lyase activity and introduces nicks in the DNA strand. Cleaves the DNA backbone by beta-delta elimination to generate a single-strand break at the site of the removed base with both 3'- and 5'-phosphates. Has DNA glycosylase/lyase activity towards mismatched uracil and thymine, in particular in U:C and T:C mismatches. Specifically binds 5-hydroxymethylcytosine (5hmC), suggesting that it acts as a specific reader of 5hmC. In Mus musculus (Mouse), this protein is Endonuclease 8-like 1 (Neil1).